We begin with the raw amino-acid sequence, 91 residues long: C-C motif chemokine 5 (91 aa).

The signal sequence occupies residues 1–23 (MKVSAATFAILLATATFRAPASA). Cystine bridges form between Cys-33-Cys-57 and Cys-34-Cys-73.

The protein belongs to the intercrine beta (chemokine CC) family.

Its subcellular location is the secreted. Chemoattractant for blood monocytes, memory T-helper cells and eosinophils. Causes the release of histamine from basophils and activates eosinophils. May activate several chemokine receptors including CCR1, CCR3, CCR4 and CCR5. May also be an agonist of the G protein-coupled receptor GPR75. Together with GPR75, may play a role in neuron survival through activation of a downstream signaling pathway involving the PI3, Akt and MAP kinases. By activating GPR75 may also play a role in insulin secretion by islet cells. In Canis lupus familiaris (Dog), this protein is C-C motif chemokine 5 (CCL5).